Reading from the N-terminus, the 175-residue chain is Large ribosomal subunit protein uL10 (175 aa).

It belongs to the universal ribosomal protein uL10 family. In terms of assembly, part of the ribosomal stalk of the 50S ribosomal subunit. The N-terminus interacts with L11 and the large rRNA to form the base of the stalk. The C-terminus forms an elongated spine to which L12 dimers bind in a sequential fashion forming a multimeric L10(L12)X complex.

Forms part of the ribosomal stalk, playing a central role in the interaction of the ribosome with GTP-bound translation factors. This is Large ribosomal subunit protein uL10 from Xylella fastidiosa (strain M23).